We begin with the raw amino-acid sequence, 295 residues long: Sulfotransferase 1A1 (295 aa).

48-53 (KSGTTW) provides a ligand contact to 3'-phosphoadenylyl sulfate. 106–108 (KTH) contributes to the substrate binding site. Catalysis depends on His-108, which acts as the Proton acceptor. 3'-phosphoadenylyl sulfate contacts are provided by residues Arg-130, Ser-138, Tyr-193, 227 to 232 (TSFKEM), and 255 to 259 (FMRKG). Ser-138 carries the phosphoserine modification.

This sequence belongs to the sulfotransferase 1 family. In terms of assembly, homodimer. As to expression, ubiquitously expressed in canine tissues with highest expression in male and female liver.

Its subcellular location is the cytoplasm. The enzyme catalyses a phenol + 3'-phosphoadenylyl sulfate = an aryl sulfate + adenosine 3',5'-bisphosphate + H(+). It carries out the reaction 17beta-estradiol + 3'-phosphoadenylyl sulfate = 17beta-estradiol 3-sulfate + adenosine 3',5'-bisphosphate + H(+). The catalysed reaction is 4-ethylphenol + 3'-phosphoadenylyl sulfate = 4-ethylphenyl sulfate + adenosine 3',5'-bisphosphate + H(+). It catalyses the reaction 4-nitrophenol + 3'-phosphoadenylyl sulfate = 4-nitrophenyl sulfate + adenosine 3',5'-bisphosphate. The enzyme catalyses dopamine + 3'-phosphoadenylyl sulfate = dopamine 3-O-sulfate + adenosine 3',5'-bisphosphate + H(+). It carries out the reaction dopamine + 3'-phosphoadenylyl sulfate = dopamine 4-O-sulfate + adenosine 3',5'-bisphosphate + H(+). The catalysed reaction is 3,3',5-triiodo-L-thyronine + 3'-phosphoadenylyl sulfate = 3,3',5-triiodo-L-thyronine sulfate + adenosine 3',5'-bisphosphate + H(+). It catalyses the reaction 3,3',5'-triiodo-L-thyronine + 3'-phosphoadenylyl sulfate = 3,3',5'-triiodo-L-thyronine sulfate + adenosine 3',5'-bisphosphate + H(+). The enzyme catalyses 3,3'-diiodo-L-thyronine + 3'-phosphoadenylyl sulfate = 3,3'-diiodo-L-thyronine sulfate + adenosine 3',5'-bisphosphate + H(+). It carries out the reaction L-thyroxine + 3'-phosphoadenylyl sulfate = L-thyroxine sulfate + adenosine 3',5'-bisphosphate + H(+). Functionally, sulfotransferase that utilizes 3'-phospho-5'-adenylyl sulfate (PAPS) as sulfonate donor to catalyze the sulfate conjugation of a wide variety of acceptor molecules bearing a hydroxyl or an amine group. Sulfonation increases the water solubility of most compounds, and therefore their renal excretion, but it can also result in bioactivation to form active metabolites. Displays broad substrate specificity for small phenolic compounds. Plays an important role in the sulfonation of endogenous molecules such as steroid hormones. Mediates also the metabolic activation of carcinogenic N-hydroxyarylamines leading to highly reactive intermediates capable of forming DNA adducts, potentially resulting in mutagenesis. May play a role in gut microbiota-host metabolic interaction. O-sulfonates 4-ethylphenol (4-EP), a dietary tyrosine-derived metabolite produced by gut bacteria. The product 4-EPS crosses the blood-brain barrier and may negatively regulate oligodendrocyte maturation and myelination, affecting the functional connectivity of different brain regions associated with the limbic system. Catalyzes the sulfate conjugation of dopamine. Catalyzes the sulfation of T4 (L-thyroxine/3,5,3',5'-tetraiodothyronine), T3 (3,5,3'-triiodothyronine), rT3 (3,3',5'-triiodothyronine) and 3,3'-T2 (3,3'-diiodothyronine), with a substrate preference of 3,3'-T2 &gt; rT3 &gt; T3 &gt; T4. This Canis lupus familiaris (Dog) protein is Sulfotransferase 1A1 (SULT1A1).